The sequence spans 148 residues: SsrA-binding protein (148 aa).

The protein belongs to the SmpB family.

The protein resides in the cytoplasm. Functionally, required for rescue of stalled ribosomes mediated by trans-translation. Binds to transfer-messenger RNA (tmRNA), required for stable association of tmRNA with ribosomes. tmRNA and SmpB together mimic tRNA shape, replacing the anticodon stem-loop with SmpB. tmRNA is encoded by the ssrA gene; the 2 termini fold to resemble tRNA(Ala) and it encodes a 'tag peptide', a short internal open reading frame. During trans-translation Ala-aminoacylated tmRNA acts like a tRNA, entering the A-site of stalled ribosomes, displacing the stalled mRNA. The ribosome then switches to translate the ORF on the tmRNA; the nascent peptide is terminated with the 'tag peptide' encoded by the tmRNA and targeted for degradation. The ribosome is freed to recommence translation, which seems to be the essential function of trans-translation. The protein is SsrA-binding protein of Pseudothermotoga lettingae (strain ATCC BAA-301 / DSM 14385 / NBRC 107922 / TMO) (Thermotoga lettingae).